The sequence spans 97 residues: MAKTASPGATPPGNGTEPLPDNYEMALAELETLVARMEGGALSLEDSLTAYRRGATLVAFCQQQLEKVEQQVRVLDGATLKPLSSGTAATDGEDDDL.

Positions M1 to N22 are disordered.

It belongs to the XseB family. Heterooligomer composed of large and small subunits.

It is found in the cytoplasm. It carries out the reaction Exonucleolytic cleavage in either 5'- to 3'- or 3'- to 5'-direction to yield nucleoside 5'-phosphates.. Functionally, bidirectionally degrades single-stranded DNA into large acid-insoluble oligonucleotides, which are then degraded further into small acid-soluble oligonucleotides. The protein is Exodeoxyribonuclease 7 small subunit of Burkholderia lata (strain ATCC 17760 / DSM 23089 / LMG 22485 / NCIMB 9086 / R18194 / 383).